Here is a 224-residue protein sequence, read N- to C-terminus: Transmembrane emp24 domain-containing protein 7 (224 aa).

Positions 1 to 34 (MPRPGSAQRWAAVAGRWGCRLLALLLLVPGPGGA) are cleaved as a signal peptide. Residues 35-187 (SEITFELPDN…RAEDLNTRVA (153 aa)) are Lumenal-facing. The GOLD domain occupies 46 to 128 (KQCFYEDIAQ…HKTVYFDFQV (83 aa)). Asparagine 103 carries an N-linked (GlcNAc...) asparagine glycan. The helical transmembrane segment at 188-208 (YWSVGEALILLVVSIGQVFLL) threads the bilayer. Topologically, residues 209–224 (KSFFSDKRTTTTRVGS) are cytoplasmic. The COPII vesicle coat-binding signature appears at 211–212 (FF). Residues 211–224 (FFSDKRTTTTRVGS) carry the COPI vesicle coat-binding motif.

Belongs to the EMP24/GP25L family. In terms of assembly, predominantly monomeric and to lesser extent homodimeric in endoplasmic reticulum, endoplasmic reticulum-Golgi intermediate compartment and cis-Golgi network. Oligomerizes with other members of the EMP24/GP25L family such as TMED2, TMED9 and TMED10. Interacts (via C-terminus) with COPG1; the interaction involves dimeric TMED7. Post-translationally, N-linked glycosylated in complex form containing terminal sialic acid.

Its subcellular location is the endoplasmic reticulum membrane. The protein localises to the golgi apparatus. The protein resides in the cis-Golgi network membrane. It is found in the endoplasmic reticulum-Golgi intermediate compartment membrane. It localises to the cytoplasmic vesicle. Its subcellular location is the COPI-coated vesicle membrane. The protein localises to the COPII-coated vesicle membrane. Its function is as follows. Potential role in vesicular protein trafficking, mainly in the early secretory pathway. Appears to play a role in the biosynthesis of secreted cargo including processing and post-translational modifications. This is Transmembrane emp24 domain-containing protein 7 (TMED7) from Homo sapiens (Human).